We begin with the raw amino-acid sequence, 228 residues long: Large ribosomal subunit protein uL3 (228 aa).

Gln-151 carries the post-translational modification N5-methylglutamine.

Belongs to the universal ribosomal protein uL3 family. Part of the 50S ribosomal subunit. Forms a cluster with proteins L14 and L19. Post-translationally, methylated by PrmB.

In terms of biological role, one of the primary rRNA binding proteins, it binds directly near the 3'-end of the 23S rRNA, where it nucleates assembly of the 50S subunit. This chain is Large ribosomal subunit protein uL3, found in Rhizobium meliloti (strain 1021) (Ensifer meliloti).